The primary structure comprises 156 residues: Envelope glycoprotein L (156 aa).

The signal sequence occupies residues 1 to 16; that stretch reads MSPLVAVLVFFSAALG. The interval 21–141 is interaction with gH; the sequence is GVAGNPHGLD…KELGEVAVHK (121 aa). The gL alphaherpesvirus-type domain occupies 50–156; sequence ELEWDDEDHP…LRYNGGPPAE (107 aa). A disulfide bond links cysteine 71 and cysteine 95.

Belongs to the herpesviridae glycoprotein L (gL) family. Alphaherpesvirinae gL subfamily. As to quaternary structure, interacts with glycoprotein H (gH); this interaction is necessary for the correct processing and cell surface expression of gH. The heterodimer gH/gL seems to interact with gB trimers during fusion. In terms of processing, O-glycosylated, and sialylated.

It localises to the virion membrane. Its subcellular location is the host cell membrane. It is found in the host Golgi apparatus. The protein resides in the host trans-Golgi network. Its function is as follows. The heterodimer glycoprotein H-glycoprotein L is required for the fusion of viral and plasma membranes leading to virus entry into the host cell. Acts as a functional inhibitor of gH and maintains gH in an inhibited form. Upon binding to host integrins, gL dissociates from gH leading to activation of the viral fusion glycoproteins gB and gH. This chain is Envelope glycoprotein L, found in Sus scrofa (Pig).